Consider the following 313-residue polypeptide: Potassium channel subfamily K member 6 (313 aa).

Over 1-4 the chain is Cytoplasmic; that stretch reads MRRG. The helical transmembrane segment at 5–25 threads the bilayer; that stretch reads ALLASALAAYAGYLALGALLV. N-linked (GlcNAc...) asparagine glycans are attached at residues asparagine 79 and asparagine 85. Residues 90-115 constitute an intramembrane region (pore-forming); sequence AWDFASALFFASTLVTTVGYGYTTPL. Positions 106, 107, 108, and 109 each coordinate K(+). The tract at residues 106-111 is selectivity filter 1; the sequence is TVGYGY. The helical transmembrane segment at 121–141 threads the bilayer; sequence AFSIVFALLGVPITMLLLTAS. At 142–172 the chain is on the cytoplasmic side; that stretch reads AQRLSLLLTHAPLSWLSLHWGWPPQRAARWH. A helical membrane pass occupies residues 173 to 193; the sequence is LVALLMVIVAIFFLVPAAVFA. The segment at residues 199–223 is an intramembrane region (pore-forming); it reads WSFLDAFYFCFISLSTIGLGDYVPG. Residues threonine 214, isoleucine 215, and glycine 216 each contribute to the K(+) site. The tract at residues 214–219 is selectivity filter 2; that stretch reads TIGLGD. A helical transmembrane segment spans residues 236–256; sequence VLVTAYLFLGLVAMVLVLQTF. Topologically, residues 257-313 are cytoplasmic; the sequence is RRVSDLHGLTELILLPDPDPASLSQDEDDQVAVLDARTDLHQHLSAASHADYASIPR. Short sequence motifs (lysosomal targeting signal) lie at residues 282–290 and 308–312; these read DEDDQVAVL and YASIP.

The protein belongs to the two pore domain potassium channel (TC 1.A.1.8) family. In terms of assembly, homodimer; disulfide-linked. In terms of processing, N-glycosylation is necessary for targeting to lysosomes.

It is found in the late endosome membrane. It localises to the lysosome membrane. The enzyme catalyses K(+)(in) = K(+)(out). In terms of biological role, k(+) channel that conducts outward rectifying currents at the membranes of the endolysosomal system. Active in lysosomes where it regulates lysosome numbers and size. In macrophages, enables K(+) efflux coupled to ATP-induced NLRP3 inflammasome activation upon bacterial infection. Cooperates with ATP-gated P2RX7 to activate NLRP3 inflammasome, with P2RX7 conducting Ca(2+) and Na(+) influx that sets the membrane potential for K(+) efflux. The protein is Potassium channel subfamily K member 6 of Mus musculus (Mouse).